The primary structure comprises 408 residues: Digeranylgeranylglycerophospholipid reductase 1 (408 aa).

Positions 15, 34, 45, 46, 48, 99, 123, 279, 291, and 292 each coordinate FAD.

This sequence belongs to the geranylgeranyl reductase family. DGGGPL reductase subfamily. FAD is required as a cofactor.

The enzyme catalyses a 2,3-bis-O-phytanyl-sn-glycerol 1-phospholipid + 8 oxidized 2[4Fe-4S]-[ferredoxin] = a 2,3-bis-O-(geranylgeranyl)-sn-glycerol 1-phospholipid + 8 reduced 2[4Fe-4S]-[ferredoxin] + 16 H(+). The catalysed reaction is 2,3-bis-O-(phytanyl)-sn-glycerol 1-phosphate + 8 oxidized 2[4Fe-4S]-[ferredoxin] = 2,3-bis-O-(geranylgeranyl)-sn-glycerol 1-phosphate + 8 reduced 2[4Fe-4S]-[ferredoxin] + 16 H(+). It catalyses the reaction a 2,3-bis-O-phytanyl-sn-glycerol 1-phospholipid + 8 A = a 2,3-bis-O-(geranylgeranyl)-sn-glycerol 1-phospholipid + 8 AH2. It carries out the reaction CDP-2,3-bis-O-(geranylgeranyl)-sn-glycerol + 8 AH2 = CDP-2,3-bis-O-(phytanyl)-sn-glycerol + 8 A. The enzyme catalyses archaetidylserine + 8 AH2 = 2,3-bis-O-phytanyl-sn-glycero-3-phospho-L-serine + 8 A. Its pathway is membrane lipid metabolism; glycerophospholipid metabolism. In terms of biological role, is involved in the reduction of 2,3-digeranylgeranylglycerophospholipids (unsaturated archaeols) into 2,3-diphytanylglycerophospholipids (saturated archaeols) in the biosynthesis of archaeal membrane lipids. Catalyzes the formation of archaetidic acid (2,3-di-O-phytanyl-sn-glyceryl phosphate) from 2,3-di-O-geranylgeranylglyceryl phosphate (DGGGP) via the hydrogenation of each double bond of the isoprenoid chains. Is also probably able to reduce double bonds of geranyl groups in CDP-2,3-bis-O-(geranylgeranyl)-sn-glycerol and archaetidylserine, thus acting at various stages in the biosynthesis of archaeal membrane lipids. This is Digeranylgeranylglycerophospholipid reductase 1 from Methanococcoides burtonii (strain DSM 6242 / NBRC 107633 / OCM 468 / ACE-M).